Consider the following 315-residue polypeptide: Lipoyl synthase (315 aa).

[4Fe-4S] cluster contacts are provided by Cys62, Cys67, Cys73, Cys88, Cys92, Cys95, and Ser302. Residues 74 to 291 (FNHGAATFMI…KKIALKLGFS (218 aa)) enclose the Radical SAM core domain.

It belongs to the radical SAM superfamily. Lipoyl synthase family. The cofactor is [4Fe-4S] cluster.

It localises to the cytoplasm. The catalysed reaction is [[Fe-S] cluster scaffold protein carrying a second [4Fe-4S](2+) cluster] + N(6)-octanoyl-L-lysyl-[protein] + 2 oxidized [2Fe-2S]-[ferredoxin] + 2 S-adenosyl-L-methionine + 4 H(+) = [[Fe-S] cluster scaffold protein] + N(6)-[(R)-dihydrolipoyl]-L-lysyl-[protein] + 4 Fe(3+) + 2 hydrogen sulfide + 2 5'-deoxyadenosine + 2 L-methionine + 2 reduced [2Fe-2S]-[ferredoxin]. It participates in protein modification; protein lipoylation via endogenous pathway; protein N(6)-(lipoyl)lysine from octanoyl-[acyl-carrier-protein]: step 2/2. Functionally, catalyzes the radical-mediated insertion of two sulfur atoms into the C-6 and C-8 positions of the octanoyl moiety bound to the lipoyl domains of lipoate-dependent enzymes, thereby converting the octanoylated domains into lipoylated derivatives. The protein is Lipoyl synthase of Ruthia magnifica subsp. Calyptogena magnifica.